The chain runs to 151 residues: Large ribosomal subunit protein uL15 (151 aa).

The disordered stretch occupies residues 1–58; it reads MELNQLKSVPKARNHKTKTLGRGHGSGLGKTSGRGQKGQKARKSGLTRPGFEGGQTPL. Residues 10 to 21 are compositionally biased toward basic residues; it reads PKARNHKTKTLG. Positions 22–36 are enriched in gly residues; the sequence is RGHGSGLGKTSGRGQ.

This sequence belongs to the universal ribosomal protein uL15 family. Part of the 50S ribosomal subunit.

In terms of biological role, binds to the 23S rRNA. The sequence is that of Large ribosomal subunit protein uL15 from Mycoplasma pneumoniae (strain ATCC 29342 / M129 / Subtype 1) (Mycoplasmoides pneumoniae).